The following is a 738-amino-acid chain: Glycogen [starch] synthase, muscle (738 aa).

A Phosphoserine; by AMPK and PKA modification is found at serine 8. Serine 11 carries the post-translational modification Phosphoserine. Position 39 (lysine 39) interacts with UDP. Histidine 205 and arginine 211 together coordinate UDP-alpha-D-glucose. Residues histidine 291, glutamate 292, glutamine 294, histidine 297, and lysine 301 each contribute to the alpha-D-glucose 6-phosphate site. Position 331 (arginine 331) interacts with UDP. Residue arginine 331 coordinates UDP-alpha-D-glucose. At serine 412 the chain carries Phosphoserine. Residue histidine 501 coordinates alpha-D-glucose 6-phosphate. UDP-alpha-D-glucose is bound by residues glutamate 510, tryptophan 512, and glycine 513. Threonine 515 is a binding site for UDP. Residues arginine 582 and arginine 586 each coordinate alpha-D-glucose 6-phosphate. Residues 632–738 (QGYRYPRPAS…PTSSLGEERN (107 aa)) are disordered. A Phosphoserine; by DYRK2, GSK3-alpha, GSK3-beta and PASK modification is found at serine 641. Phosphoserine is present on residues serine 645, serine 649, serine 652, serine 653, serine 657, and serine 672. A compositionally biased stretch (acidic residues) spans 658–681 (EDEEEPRDGPLGEDSERYDEEEEA). Basic and acidic residues predominate over residues 682–695 (AKDRRNIRAPEWPR). Residues serine 698, serine 709, and serine 711 each carry the phosphoserine modification. A compositionally biased stretch (low complexity) spans 698 to 738 (SCSSSTGGSKRSNSVDTGPSSSLSTPTEPLSPTSSLGEERN). Threonine 722 and threonine 724 each carry phosphothreonine. Phosphoserine is present on residues serine 728 and serine 732.

The protein belongs to the glycosyltransferase 3 family. Part of the GYS1-GYG1 complex, a heterooctamer composed of a tetramer of GYS1 and 2 dimers of GYG1, where each GYS1 protomer binds to one GYG1 subunit (via GYG1 C-terminus); the GYS1 tetramer may dissociate from GYG1 dimers to continue glycogen polymerization on its own. Primed phosphorylation at Ser-657 (site 5) by CSNK2A1 and CSNK2A2 is required for inhibitory phosphorylation at Ser-641 (site 3a), Ser-645 (site 3b), Ser-649 (site 3c) and Ser-653 (site 4) by GSK3A an GSK3B. Phosphorylated at Ser-641 by PASK, leading to inactivation; phosphorylation by PASK is inhibited by glycogen. Phosphorylated at Ser-641 by DYRK2, leading to inactivation. Dephosphorylation at Ser-641 and Ser-645 by PP1 activates the enzyme. Phosphorylation at Ser-8 by AMPK inactivates the enzyme activity.

The catalysed reaction is [(1-&gt;4)-alpha-D-glucosyl](n) + UDP-alpha-D-glucose = [(1-&gt;4)-alpha-D-glucosyl](n+1) + UDP + H(+). It participates in glycan biosynthesis; glycogen biosynthesis. With respect to regulation, allosteric activation by glucose-6-phosphate. Phosphorylation reduces the activity towards UDP-glucose. When in the non-phosphorylated state, glycogen synthase does not require glucose-6-phosphate as an allosteric activator; when phosphorylated it does. Functionally, glycogen synthase participates in the glycogen biosynthetic process along with glycogenin and glycogen branching enzyme. Extends the primer composed of a few glucose units formed by glycogenin by adding new glucose units to it. In this context, glycogen synthase transfers the glycosyl residue from UDP-Glc to the non-reducing end of alpha-1,4-glucan. The chain is Glycogen [starch] synthase, muscle (Gys1) from Mus musculus (Mouse).